The following is a 301-amino-acid chain: m7GpppX diphosphatase (301 aa).

Substrate-binding positions include glutamate 154, lysine 176, and 237–248 (HYQPSFYHLHVH). The Histidine triad motif motif lies at 244–248 (HLHVH). The active-site Nucleophile is histidine 246.

It belongs to the HIT family.

It is found in the nucleus. It carries out the reaction a 5'-end (N(7)-methyl 5'-triphosphoguanosine)-ribonucleoside in mRNA + H2O = N(7)-methyl-GMP + a 5'-end diphospho-ribonucleoside in mRNA + 2 H(+). The enzyme catalyses a 5'-end (N(2),N(2),N(7)-trimethyl 5'-triphosphoguanosine)-ribonucleoside in mRNA + H2O = (N(2),N(2),N(7))-trimethyl-GMP + a 5'-end diphospho-ribonucleoside in mRNA + 2 H(+). The hydrolytic product 7-methylguanosine diphosphate (m7GDP) efficiently inhibits the decapping scavenger activity and acts as a competitive inhibitor in vitro. Functionally, decapping scavenger enzyme that catalyzes the cleavage of a residual cap structure following the degradation of mRNAs of the 3'-&gt;5' exosome-mediated mRNA decay pathway. Hydrolyzes cap analog structures like 7-methylguanosine nucleoside triphosphate (m7GpppG) and tri-methyl guanosine nucleoside triphosphate (m3(2,2,7)GpppG) with up to 2 nucleotide substrates (small capped oligoribonucleotides) and specifically releases 5'-phosphorylated RNA fragments and 7-methylguanosine monophosphate (m7GMP). Does not hydrolyze unmethylated cap analog (GpppG) and shows no decapping activity on intact m7GpppG-capped mRNA molecules. Does not hydrolyze 7-methylguanosine diphosphate (m7GDP) and tri-methylguanosine diphosphate (m3(2,2,7)GDP) to m(7)GMP and m3(2,2,7)GMP, respectively. May also play a role in the 5'-&gt;3 mRNA decay pathway; m7GDP, the downstream product released by the 5'-&gt;3' mRNA mediated decapping activity, may be also converted by dcs-1 to m7GMP. Binds to m7GpppG and strongly to m7GDP. The polypeptide is m7GpppX diphosphatase (Ascaris suum (Pig roundworm)).